We begin with the raw amino-acid sequence, 1215 residues long: DNA-directed RNA polymerase subunit beta' (1215 aa).

Residues cysteine 60, cysteine 62, cysteine 75, and cysteine 78 each coordinate Zn(2+). The Mg(2+) site is built by aspartate 450, aspartate 452, and aspartate 454. Zn(2+)-binding residues include cysteine 818, cysteine 892, cysteine 899, and cysteine 902.

It belongs to the RNA polymerase beta' chain family. As to quaternary structure, the RNAP catalytic core consists of 2 alpha, 1 beta, 1 beta' and 1 omega subunit. When a sigma factor is associated with the core the holoenzyme is formed, which can initiate transcription. It depends on Mg(2+) as a cofactor. Requires Zn(2+) as cofactor.

It catalyses the reaction RNA(n) + a ribonucleoside 5'-triphosphate = RNA(n+1) + diphosphate. DNA-dependent RNA polymerase catalyzes the transcription of DNA into RNA using the four ribonucleoside triphosphates as substrates. This is DNA-directed RNA polymerase subunit beta' from Streptococcus suis (strain 98HAH33).